Consider the following 216-residue polypeptide: Ras-related protein Rab-5C (216 aa).

GTP-binding residues include S30, A31, G33, K34, S35, S36, H47, E48, T53, and G79. S35 is a binding site for Mg(2+). 2 short sequence motifs (switch) span residues Q45 to A57 and A78 to A94. T53 lines the Mg(2+) pocket. Position 85 is a phosphoserine (S85). GTP-binding residues include N134, K135, D137, A165, and K166. Residues N185–N216 form a disordered region. Residues Q203 to N216 are compositionally biased toward polar residues. 2 S-geranylgeranyl cysteine lipidation sites follow: C213 and C214.

The protein belongs to the small GTPase superfamily. Rab family. In terms of assembly, interacts with EEA1 and INCA1. Interacts with GDI1, GDI2, CHML and CHM; phosphorylation at Ser-85 disrupts this interaction. Mg(2+) serves as cofactor. Phosphorylation of Ser-85 in the switch II region by LRRK2 prevents the association of RAB regulatory proteins, including CHM, CHML and RAB GDP dissociation inhibitors GDI1 and GDI2.

The protein resides in the cell membrane. The protein localises to the early endosome membrane. It is found in the melanosome. It carries out the reaction GTP + H2O = GDP + phosphate + H(+). With respect to regulation, regulated by guanine nucleotide exchange factors (GEFs) which promote the exchange of bound GDP for free GTP. Regulated by GTPase activating proteins (GAPs) which increase the GTP hydrolysis activity. Inhibited by GDP dissociation inhibitors (GDIs). Its function is as follows. The small GTPases Rab are key regulators of intracellular membrane trafficking, from the formation of transport vesicles to their fusion with membranes. Rabs cycle between an inactive GDP-bound form and an active GTP-bound form that is able to recruit to membranes different sets of downstream effectors directly responsible for vesicle formation, movement, tethering and fusion. The chain is Ras-related protein Rab-5C (RAB5C) from Canis lupus familiaris (Dog).